The primary structure comprises 130 residues: MKVVYFSFTGNVRRFIARSGFENTLEITNDNCAEVRIDEPYILVTSTIGFGEVPDVVQTFLRHNGTMIRGVVGSGNRNWGQNFAKASDTISKDYMVPLLMKFEVQGTKKDVEEFKDKVGHFYEDNERKAI.

It belongs to the NrdI family.

In terms of biological role, probably involved in ribonucleotide reductase function. This is Protein NrdI from Staphylococcus carnosus (strain TM300).